The primary structure comprises 1409 residues: Tensin-2 (1409 aa).

The tract at residues 1-35 is disordered; the sequence is MKSSGPVERLLRALGRRDSSRAASRPRKAEPHSFR. The segment covering 9–20 has biased composition (basic and acidic residues); it reads RLLRALGRRDSS. The segment at 31–79 adopts a Phorbol-ester/DAG-type zinc-finger fold; sequence PHSFREKVFRKKPPVCAVCKVTIDGTGVSCRVCKVATHRKCEAKVTSAC. Phosphothreonine is present on Thr91. Residues Ser118 and Ser120 each carry the phosphoserine modification. The Phosphatase tensin-type domain maps to 122–294; that stretch reads DPLMERRWDL…SYFSGLLSGS (173 aa). The active-site Phosphocysteine intermediate is Cys231. Residues 299–425 form the C2 tensin-type domain; that stretch reads SSPLFLHYVL…ASVEFVFSSS (127 aa). Residue Ser455 is modified to Phosphoserine. Tyr456 is subject to Phosphotyrosine. A disordered region spans residues 462 to 536; it reads HHEDSVDGSL…SPGRPPPTAA (75 aa). Ser466 is subject to Phosphoserine. Thr474 carries the post-translational modification Phosphothreonine. A Phosphoserine modification is found at Ser481. Tyr483 is modified (phosphotyrosine). A compositionally biased stretch (pro residues) spans 491-506; that stretch reads RQTPPAPSPEPPPPPM. The residue at position 555 (Arg555) is an Omega-N-methylarginine. 3 disordered regions span residues 562–582, 812–1098, and 1111–1130; these read AILD…GVYP, PGEG…SSPA, and LSDN…QSNV. Residues Ser820, Ser825, Ser830, Ser832, Ser835, and Ser845 each carry the phosphoserine modification. 2 stretches are compositionally biased toward polar residues: residues 900-918 and 930-940; these read SASS…SSPV and RSPTSAPTQRL. A Phosphothreonine modification is found at Thr910. Phosphoserine is present on residues Ser931, Ser941, and Ser972. Pro residues predominate over residues 968–982; the sequence is PLAPSPVSPTFPPSS. A Phosphothreonine modification is found at Thr977. 2 positions are modified to phosphoserine: Ser991 and Ser1003. The span at 1046-1056 shows a compositional bias: pro residues; the sequence is PEPPQSSPTPA. Residues 1140-1247 enclose the SH2 domain; that stretch reads WYKPHLSRDQ…SLPCCLRIPS (108 aa). Thr1182 is subject to Phosphothreonine. A Phosphoserine modification is found at Ser1247. The PTB domain occupies 1275–1408; the sequence is ACSVLYLTSV…FITKVLLGQR (134 aa).

The protein belongs to the PTEN phosphatase protein family. Interacts with AXL. Interacts with SYK; leading to its phosphorylation. Interacts with SQSTM1 (via PB1 domain); the interaction leads to sequestration of TNS2 in cytoplasmic aggregates with SQSTM1 and promotes TNS2 ubiquitination and proteasomal degradation. Ubiquitinated following sequestration in cytoplasmic aggregates with SQSTM1, leading to proteasomal degradation. In terms of tissue distribution, detected in heart, kidney, brain, thymus, spleen, liver, placenta, lung, skeletal muscle and small intestine.

It localises to the cell junction. The protein localises to the focal adhesion. The protein resides in the cell membrane. Its subcellular location is the cytoplasm. The catalysed reaction is O-phospho-L-tyrosyl-[protein] + H2O = L-tyrosyl-[protein] + phosphate. Its function is as follows. Tyrosine-protein phosphatase which regulates cell motility, proliferation and muscle-response to insulin. Phosphatase activity is mediated by binding to phosphatidylinositol-3,4,5-triphosphate (PtdIns(3,4,5)P3) via the SH2 domain. In muscles and under catabolic conditions, dephosphorylates IRS1 leading to its degradation and muscle atrophy. Negatively regulates PI3K-AKT pathway activation. Dephosphorylates nephrin NPHS1 in podocytes which regulates activity of the mTORC1 complex. Under normal glucose conditions, NPHS1 outcompetes IRS1 for binding to phosphatidylinositol 3-kinase (PI3K) which balances mTORC1 activity but high glucose conditions lead to up-regulation of TNS2, increased NPHS1 dephosphorylation and activation of mTORC1, contributing to podocyte hypertrophy and proteinuria. Required for correct podocyte morphology, podocyte-glomerular basement membrane interaction and integrity of the glomerular filtration barrier. Enhances RHOA activation in the presence of DLC1. Plays a role in promoting DLC1-dependent remodeling of the extracellular matrix. The sequence is that of Tensin-2 (TNS2) from Homo sapiens (Human).